Reading from the N-terminus, the 128-residue chain is uncharacterized protein (128 aa).

Positions 1–24 are cleaved as a signal peptide; the sequence is MKMTKLTTLLLTATLGLASGAALA. Low complexity-rich tracts occupy residues 24–44 and 52–70; these read AAESNAQSSNGQANSAANAGQ and NVAPNDVNNNDINTNGNTN. Residues 24 to 128 form a disordered region; the sequence is AAESNAQSSN…VNTKTDGTTQ (105 aa). A compositionally biased stretch (polar residues) spans 71–82; the sequence is STMQHPDGSTMN. Over residues 85–110 the composition is skewed to basic and acidic residues; it reads GMTKDEEHKNTMCKDGRCPDINKKVE. Residues 113 to 128 are compositionally biased toward polar residues; the sequence is NGVNNDVNTKTDGTTQ.

This is an uncharacterized protein from Salmonella typhi.